We begin with the raw amino-acid sequence, 189 residues long: Interferon alpha-5 (189 aa).

The N-terminal stretch at 1–23 is a signal peptide; the sequence is MARLCAFLMVLPVLSYWPTCSLG. 2 cysteine pairs are disulfide-bonded: Cys-24-Cys-122 and Cys-52-Cys-162. N-linked (GlcNAc...) asparagine glycosylation occurs at Asn-101.

Belongs to the alpha/beta interferon family.

It is found in the secreted. In terms of biological role, produced by macrophages, IFN-alpha have antiviral activities. Interferon stimulates the production of two enzymes: a protein kinase and an oligoadenylate synthetase. The protein is Interferon alpha-5 (Ifna5) of Mus musculus (Mouse).